A 1699-amino-acid chain; its full sequence is Eukaryotic translation initiation factor 2-alpha kinase gcn-2 (1699 aa).

The 117-residue stretch at 22-138 folds into the RWD domain; it reads EEKLALDAVY…HRVREFLTDH (117 aa). 2 consecutive Protein kinase domains span residues 108-507 and 508-999; these read LTIL…DVVL and VRNK…DEDL. ATP contacts are provided by residues 114-122, K154, 497-505, and K520; these read MADTWEGCV and LGRGGFGDV. Disordered regions lie at residues 572 to 615 and 632 to 725; these read DSSL…SLMP and KEWS…SVFE. A compositionally biased stretch (acidic residues) spans 669 to 706; it reads SSDDEDDDDSSEIDWDAESEEVEDEESDDSDEEDEDDG. A compositionally biased stretch (polar residues) spans 711 to 720; the sequence is QLNTETSTGA. D829 acts as the Proton acceptor in catalysis.

Belongs to the protein kinase superfamily. Ser/Thr protein kinase family. GCN2 subfamily.

It catalyses the reaction L-seryl-[protein] + ATP = O-phospho-L-seryl-[protein] + ADP + H(+). The enzyme catalyses L-threonyl-[protein] + ATP = O-phospho-L-threonyl-[protein] + ADP + H(+). Functionally, serine/threonine-protein kinase which phosphorylates the alpha subunit of eukaryotic translation-initiation factor 2 (eIF2alpha), leading to its inactivation and thus to a rapid reduction of translational initiation and repression of global protein synthesis. Involved in the unfolded protein response (UPR) triggered by several stresses including mitochondrial, osmotic and oxidative stresses, amino acid deprivation and UV irradiation, probably by phosphorylating and inhibiting eIF2alpha. In addition, leads to the selective translation/transcription of some mRNA including atf-5, pha-4 and gpdh-1 which are part of the UPR. Required for maintaining lifespan during amino acid starvation. Involved in hypoxia-mediated adaptive protective response. This chain is Eukaryotic translation initiation factor 2-alpha kinase gcn-2, found in Caenorhabditis elegans.